We begin with the raw amino-acid sequence, 573 residues long: Anti-Muellerian hormone type-2 receptor (573 aa).

An N-terminal signal peptide occupies residues 1–17 (MLGSLGLWALLPTAVEA). At 18 to 149 (PPNRRTCVFF…APGESIWMAL (132 aa)) the chain is on the extracellular side. 2 cysteine pairs are disulfide-bonded: Cys55-Cys79 and Cys92-Cys109. N-linked (GlcNAc...) asparagine glycosylation is present at Asn66. Asn119 carries an N-linked (GlcNAc...) asparagine glycan. A helical membrane pass occupies residues 150-170 (VLLGLFLLLLLLLGSIILALL). Over 171–573 (QRKNYRVRGE…PQPACTLSPV (403 aa)) the chain is Cytoplasmic. Residues 203–518 (LCFSQVIREG…AHPQESHPFP (316 aa)) form the Protein kinase domain. ATP is bound by residues 209 to 217 (IREGGHAVV) and Lys230. The active-site Proton acceptor is the Asp333.

Belongs to the protein kinase superfamily. TKL Ser/Thr protein kinase family. TGFB receptor subfamily. As to quaternary structure, interacts with type I receptor ACVR1. Mg(2+) serves as cofactor. Requires Mn(2+) as cofactor.

The protein resides in the membrane. The enzyme catalyses L-threonyl-[receptor-protein] + ATP = O-phospho-L-threonyl-[receptor-protein] + ADP + H(+). The catalysed reaction is L-seryl-[receptor-protein] + ATP = O-phospho-L-seryl-[receptor-protein] + ADP + H(+). Its function is as follows. On ligand binding, forms a receptor complex consisting of two type II and two type I transmembrane serine/threonine kinases. Type II receptors phosphorylate and activate type I receptors which autophosphorylate, then bind and activate SMAD transcriptional regulators. Receptor for anti-Muellerian hormone. The polypeptide is Anti-Muellerian hormone type-2 receptor (AMHR2) (Homo sapiens (Human)).